Reading from the N-terminus, the 409-residue chain is uncharacterized protein (409 aa).

Transmembrane regions (helical) follow at residues 53–73 (IITLVGLLCNIGMYLIMYVHC), 83–103 (WCYFAVAFLIFAYQTLDNVDG), 115–135 (LGELFDHVCDALSVAMFAIVM), 141–161 (IGPYWTFFSFIVGMWPFYLAH), 183–203 (VLFMIIEIITGIFGSDIWTYG), 205–225 (STTVGKIATVFVSIGAVVTCL), 243–263 (CLLQLTPICLFTALIVIWASV), 265–285 (NLITEQPHLFIMTLGILFGYI), 299–319 (CSLFYPIFVPIIIVVLNSILA), and 329–349 (TVALWILFSIACAQFLLFSYF). Residues 388 to 401 (EEGSSSIGNSTDDI) show a composition bias toward polar residues. The interval 388–409 (EEGSSSIGNSTDDINPSEIEEI) is disordered.

Belongs to the CDP-alcohol phosphatidyltransferase class-I family.

The protein localises to the membrane. This is an uncharacterized protein from Dictyostelium discoideum (Social amoeba).